Here is a 142-residue protein sequence, read N- to C-terminus: Large ribosomal subunit protein uL22c (142 aa).

The protein belongs to the universal ribosomal protein uL22 family. Part of the 50S ribosomal subunit.

It localises to the plastid. It is found in the chloroplast. This protein binds specifically to 23S rRNA. In terms of biological role, the globular domain of the protein is located near the polypeptide exit tunnel on the outside of the subunit, while an extended beta-hairpin is found that lines the wall of the exit tunnel in the center of the 70S ribosome. The protein is Large ribosomal subunit protein uL22c (rpl22) of Pinus koraiensis (Korean pine).